A 375-amino-acid chain; its full sequence is Delta(9) fatty acid conjugase-like enzyme (375 aa).

Transmembrane regions (helical) follow at residues 38-58 and 66-86; these read LSLS…LFYV and LPYS…GAFL. Residues 94–98 carry the Histidine box-1 motif; that stretch reads HECGH. Positions 130–134 match the Histidine box-2 motif; sequence HRNHH. A run of 3 helical transmembrane segments spans residues 168–188, 219–239, and 241–261; these read FGLV…YLIF, VFFS…IAIA, and GAML…AFIF. The short motif at 307–311 is the Histidine box-3 element; the sequence is HVVHH.

This sequence belongs to the fatty acid desaturase type 1 family.

Its subcellular location is the membrane. Its function is as follows. Involved in the biosynthesis of dimorphecolic acid (9-OH-18:2(10E,12E)). Catalyzes the formation of the C-9 hydroxyl group and the (E)-delta(10) double bond from the trans-linoleic acid (16:2(9Z,12E)) produced by FAD2-1. Very limited activity with cis-linoleic acid (16:2(9Z,12Z)). In Dimorphotheca sinuata (African daisy), this protein is Delta(9) fatty acid conjugase-like enzyme.